Consider the following 223-residue polypeptide: Deoxyribose-phosphate aldolase (223 aa).

The active-site Proton donor/acceptor is Asp-91. Catalysis depends on Lys-154, which acts as the Schiff-base intermediate with acetaldehyde. Residue Lys-183 is the Proton donor/acceptor of the active site.

Belongs to the DeoC/FbaB aldolase family. DeoC type 1 subfamily.

It is found in the cytoplasm. The catalysed reaction is 2-deoxy-D-ribose 5-phosphate = D-glyceraldehyde 3-phosphate + acetaldehyde. It participates in carbohydrate degradation; 2-deoxy-D-ribose 1-phosphate degradation; D-glyceraldehyde 3-phosphate and acetaldehyde from 2-deoxy-alpha-D-ribose 1-phosphate: step 2/2. Functionally, catalyzes a reversible aldol reaction between acetaldehyde and D-glyceraldehyde 3-phosphate to generate 2-deoxy-D-ribose 5-phosphate. This chain is Deoxyribose-phosphate aldolase, found in Geobacillus thermodenitrificans (strain NG80-2).